Here is a 212-residue protein sequence, read N- to C-terminus: Peptide methionine sulfoxide reductase MsrA (212 aa).

Cys52 is an active-site residue.

The protein belongs to the MsrA Met sulfoxide reductase family.

The enzyme catalyses L-methionyl-[protein] + [thioredoxin]-disulfide + H2O = L-methionyl-(S)-S-oxide-[protein] + [thioredoxin]-dithiol. It catalyses the reaction [thioredoxin]-disulfide + L-methionine + H2O = L-methionine (S)-S-oxide + [thioredoxin]-dithiol. Has an important function as a repair enzyme for proteins that have been inactivated by oxidation. Catalyzes the reversible oxidation-reduction of methionine sulfoxide in proteins to methionine. This is Peptide methionine sulfoxide reductase MsrA from Salmonella paratyphi A (strain AKU_12601).